We begin with the raw amino-acid sequence, 492 residues long: BTB/POZ domain and ankyrin repeat-containing protein NOOT2 (492 aa).

Residues 25–107 (SDVTFQVEGR…LYSGQVSIVP (83 aa)) enclose the BTB domain. Residues 113 to 127 (RPNCGERGCWHTHCT) form a C2HC NPR-type zinc finger. Positions 116, 121, 123, and 126 each coordinate Zn(2+). ANK repeat units lie at residues 248–277 (QKIR…LNLD), 278–307 (EALA…DVNY), 312–341 (AGKT…DPTV), and 345–379 (DGVT…KLRL). Disordered regions lie at residues 395–439 (ENNA…NSIG) and 455–492 (TQMG…SHDF). 2 stretches are compositionally biased toward low complexity: residues 397–413 (NASN…SSAA) and 425–439 (SSSS…NSIG). The segment covering 461 to 473 (DDNRHNNSHREAM) has biased composition (basic and acidic residues).

Belongs to the plant 'ANKYRIN-BTB/POZ' family. 'NOOT-BOP-COCH-like' (NBCL) subfamily. As to quaternary structure, homodimer.

Its subcellular location is the nucleus. It is found in the cytoplasm. The protein localises to the cell membrane. It participates in protein modification; protein ubiquitination. In terms of biological role, may act as a substrate-specific adapter of an E3 ubiquitin-protein ligase complex (CUL3-RBX1-BTB) which mediates the ubiquitination and subsequent proteasomal degradation of target proteins. Transcriptional co-regulator involved in the promotion of leaf and floral meristem fate and determinacy. Required for the abscission of senescent organs, probably by regulating the cell wall disorganization in abscission zones (AZs, e.g. pulvini at the base of leaves). Involved in the coordination of the symbiotic nodule developmental program; promotes the formation of root nodules by interacting directly with APP1 to modulate the expression of the nuclear transcription factor Y subunit (NF-YA1), a key nodulin. Involved in the regulation of indeterminate nodule identity in association with NOOT1. The chain is BTB/POZ domain and ankyrin repeat-containing protein NOOT2 from Medicago truncatula (Barrel medic).